The following is a 114-amino-acid chain: Ribosome-binding factor A (114 aa).

It belongs to the RbfA family. In terms of assembly, monomer. Binds 30S ribosomal subunits, but not 50S ribosomal subunits or 70S ribosomes.

The protein localises to the cytoplasm. Functionally, one of several proteins that assist in the late maturation steps of the functional core of the 30S ribosomal subunit. Associates with free 30S ribosomal subunits (but not with 30S subunits that are part of 70S ribosomes or polysomes). Required for efficient processing of 16S rRNA. May interact with the 5'-terminal helix region of 16S rRNA. This is Ribosome-binding factor A from Staphylococcus saprophyticus subsp. saprophyticus (strain ATCC 15305 / DSM 20229 / NCIMB 8711 / NCTC 7292 / S-41).